The primary structure comprises 218 residues: Probable nicotinate-nucleotide adenylyltransferase (218 aa).

Belongs to the NadD family.

It carries out the reaction nicotinate beta-D-ribonucleotide + ATP + H(+) = deamido-NAD(+) + diphosphate. Its pathway is cofactor biosynthesis; NAD(+) biosynthesis; deamido-NAD(+) from nicotinate D-ribonucleotide: step 1/1. Functionally, catalyzes the reversible adenylation of nicotinate mononucleotide (NaMN) to nicotinic acid adenine dinucleotide (NaAD). This Syntrophotalea carbinolica (strain DSM 2380 / NBRC 103641 / GraBd1) (Pelobacter carbinolicus) protein is Probable nicotinate-nucleotide adenylyltransferase.